Here is a 661-residue protein sequence, read N- to C-terminus: Pseudouridylate synthase 7 homolog (661 aa).

M1 is subject to N-acetylmethionine. A disordered region spans residues 1-97 (MEMTEMTGVS…GLSEECEEEE (97 aa)). S10 is subject to Phosphoserine. Residues 36 to 52 (SECSLTKGQDGLQNDFL) are compositionally biased toward polar residues. Positions 77–97 (QLEDEEEEEEDGLSEECEEEE) are enriched in acidic residues. S127 bears the Phosphoserine mark. The active-site Nucleophile is the D294. The 211-residue stretch at 370–580 (GFINYYGMQR…SGAYRKIIIR (211 aa)) folds into the TRUD domain. T610 is modified (phosphothreonine).

The protein belongs to the pseudouridine synthase TruD family. Interacts with SIRT1.

The protein resides in the nucleus. The catalysed reaction is a uridine in tRNA = a pseudouridine in tRNA. The enzyme catalyses uridine(13) in tRNA = pseudouridine(13) in tRNA. It carries out the reaction a uridine in mRNA = a pseudouridine in mRNA. Its function is as follows. Pseudouridylate synthase that catalyzes pseudouridylation of RNAs. Acts as a regulator of protein synthesis in embryonic stem cells by mediating pseudouridylation of RNA fragments derived from tRNAs (tRFs): pseudouridylated tRFs inhibit translation by targeting the translation initiation complex. Also catalyzes pseudouridylation of mRNAs: mediates pseudouridylation of mRNAs with the consensus sequence 5'-UGUAG-3'. Acts as a regulator of pre-mRNA splicing by mediating pseudouridylation of pre-mRNAs at locations associated with alternatively spliced regions. Pseudouridylation of pre-mRNAs near splice sites directly regulates mRNA splicing and mRNA 3'-end processing. In addition to mRNAs and tRNAs, binds other types of RNAs, such as snRNAs, Y RNAs and vault RNAs, suggesting that it can catalyze pseudouridylation of many RNA types. This is Pseudouridylate synthase 7 homolog from Homo sapiens (Human).